Reading from the N-terminus, the 462-residue chain is Calcitonin gene-related peptide type 1 receptor (462 aa).

The first 22 residues, Met1–Ala22, serve as a signal peptide directing secretion. The Extracellular portion of the chain corresponds to Glu23–Leu140. Intrachain disulfides connect Cys49–Cys75, Cys66–Cys106, and Cys89–Cys128. N-linked (GlcNAc...) asparagine glycans are attached at residues Asn67, Asn119, and Asn124. The chain crosses the membrane as a helical span at residues Asn141 to Phe165. The Cytoplasmic segment spans residues Tyr166–Thr176. Residues Leu177 to Val199 traverse the membrane as a helical segment. The Extracellular portion of the chain corresponds to Ala200 to Pro210. The chain crosses the membrane as a helical span at residues Val211–His239. The Cytoplasmic portion of the chain corresponds to Thr240 to Leu253. The chain crosses the membrane as a helical span at residues Met254–Ala274. At Arg275–His290 the chain is on the extracellular side. Residues Thr289–His290 form a required for RAMP3 interaction region. A helical membrane pass occupies residues Leu291–Arg315. Topologically, residues Val316–Asn330 are cytoplasmic. Residues Leu331 to Leu352 form a helical membrane-spanning segment. Residues Ile353–Asp367 are Extracellular-facing. The helical transmembrane segment at Tyr368 to Phe388 threads the bilayer. Topologically, residues Asn389 to Asp462 are cytoplasmic. Ser421 and Ser446 each carry phosphoserine.

The protein belongs to the G-protein coupled receptor 2 family. In terms of assembly, heterodimer of CALCRL and RAMP1; the receptor complex functions as CGRP receptor. Heterodimer of CALCRL and RAMP2 or CALCRL and RAMP3; the complexes function as adrenomedullin receptor. In terms of tissue distribution, detected in lung and coronary artery.

The protein localises to the cell membrane. Functionally, g protein-coupled receptor which specificity is determined by its interaction with receptor-activity-modifying proteins (RAMPs). Together with RAMP1, form the receptor complex for calcitonin-gene-related peptides CALCA/CGRP1 and CALCB/CGRP2. Together with RAMP2 or RAMP3, function as receptor complexes for adrenomedullin (ADM and ADM2). Ligand binding causes a conformation change that triggers signaling via guanine nucleotide-binding proteins (G proteins) and modulates the activity of downstream effectors. Activates cAMP-dependent pathway. The sequence is that of Calcitonin gene-related peptide type 1 receptor (CALCRL) from Sus scrofa (Pig).